Here is a 379-residue protein sequence, read N- to C-terminus: UDP-4-amino-4-deoxy-L-arabinose--oxoglutarate aminotransferase (379 aa).

Residue Lys182 is modified to N6-(pyridoxal phosphate)lysine.

It belongs to the DegT/DnrJ/EryC1 family. ArnB subfamily. In terms of assembly, homodimer. It depends on pyridoxal 5'-phosphate as a cofactor.

The catalysed reaction is UDP-4-amino-4-deoxy-beta-L-arabinose + 2-oxoglutarate = UDP-beta-L-threo-pentopyranos-4-ulose + L-glutamate. Its pathway is nucleotide-sugar biosynthesis; UDP-4-deoxy-4-formamido-beta-L-arabinose biosynthesis; UDP-4-deoxy-4-formamido-beta-L-arabinose from UDP-alpha-D-glucuronate: step 2/3. It functions in the pathway bacterial outer membrane biogenesis; lipopolysaccharide biosynthesis. Its function is as follows. Catalyzes the conversion of UDP-4-keto-arabinose (UDP-Ara4O) to UDP-4-amino-4-deoxy-L-arabinose (UDP-L-Ara4N). The modified arabinose is attached to lipid A and is required for resistance to polymyxin and cationic antimicrobial peptides. This Escherichia coli O81 (strain ED1a) protein is UDP-4-amino-4-deoxy-L-arabinose--oxoglutarate aminotransferase.